Here is a 453-residue protein sequence, read N- to C-terminus: Ribosomal protein uS12 methylthiotransferase RimO (453 aa).

Positions P5 to P120 constitute an MTTase N-terminal domain. [4Fe-4S] cluster is bound by residues C14, C50, C79, C151, C155, and C158. Residues L137–R382 enclose the Radical SAM core domain. The TRAM domain occupies Q385–V453.

The protein belongs to the methylthiotransferase family. RimO subfamily. [4Fe-4S] cluster serves as cofactor.

It localises to the cytoplasm. The enzyme catalyses L-aspartate(89)-[ribosomal protein uS12]-hydrogen + (sulfur carrier)-SH + AH2 + 2 S-adenosyl-L-methionine = 3-methylsulfanyl-L-aspartate(89)-[ribosomal protein uS12]-hydrogen + (sulfur carrier)-H + 5'-deoxyadenosine + L-methionine + A + S-adenosyl-L-homocysteine + 2 H(+). Catalyzes the methylthiolation of an aspartic acid residue of ribosomal protein uS12. The sequence is that of Ribosomal protein uS12 methylthiotransferase RimO from Burkholderia vietnamiensis (strain G4 / LMG 22486) (Burkholderia cepacia (strain R1808)).